We begin with the raw amino-acid sequence, 423 residues long: Riboflavin biosynthesis protein RibBA (423 aa).

The DHBP synthase stretch occupies residues 1 to 204 (MTRLDSVERA…IADLIEWRRK (204 aa)). D-ribulose 5-phosphate-binding positions include 28–29 (RE), aspartate 33, 141–145 (RPGHT), and glutamate 165. Glutamate 29 contacts Mg(2+). Histidine 144 is a Mg(2+) binding site. Residues 205–423 (HEKHIARVAE…AVPGEFGGAV (219 aa)) are GTP cyclohydrolase II. 259–263 (RVHSE) is a GTP binding site. Zn(2+) contacts are provided by cysteine 264, cysteine 275, and cysteine 277. Residues glutamine 280, 303–305 (EGR), and threonine 325 each bind GTP. Aspartate 337 (proton acceptor; for GTP cyclohydrolase activity) is an active-site residue. The Nucleophile; for GTP cyclohydrolase activity role is filled by arginine 339. Residues threonine 360 and lysine 365 each contribute to the GTP site.

In the N-terminal section; belongs to the DHBP synthase family. The protein in the C-terminal section; belongs to the GTP cyclohydrolase II family. Mg(2+) is required as a cofactor. Mn(2+) serves as cofactor. The cofactor is Zn(2+).

The catalysed reaction is D-ribulose 5-phosphate = (2S)-2-hydroxy-3-oxobutyl phosphate + formate + H(+). It catalyses the reaction GTP + 4 H2O = 2,5-diamino-6-hydroxy-4-(5-phosphoribosylamino)-pyrimidine + formate + 2 phosphate + 3 H(+). Its pathway is cofactor biosynthesis; riboflavin biosynthesis; 2-hydroxy-3-oxobutyl phosphate from D-ribulose 5-phosphate: step 1/1. It functions in the pathway cofactor biosynthesis; riboflavin biosynthesis; 5-amino-6-(D-ribitylamino)uracil from GTP: step 1/4. Its function is as follows. Catalyzes the conversion of D-ribulose 5-phosphate to formate and 3,4-dihydroxy-2-butanone 4-phosphate. In terms of biological role, catalyzes the conversion of GTP to 2,5-diamino-6-ribosylamino-4(3H)-pyrimidinone 5'-phosphate (DARP), formate and pyrophosphate. The protein is Riboflavin biosynthesis protein RibBA of Mycolicibacterium gilvum (strain PYR-GCK) (Mycobacterium gilvum (strain PYR-GCK)).